A 338-amino-acid chain; its full sequence is MTNSVFQGRSFLAEKDFTRAELEYLIGLSAHLKDLKKRNIQHHYLAGKNIALLFEKTSTRTRAAFTTAAIDLGAHPEYLGANDIQLGKKESTEDTAKVLGRMFDGIEFRGFSQRMVEELAEFSGVPVWNGLTDEWHPTQMLADYLTVQENFGRLEGLTLVYCGDGRNNVANSLLVTGAILGVNVHIFSPKELFPEKEIVELAEGFAKESGAHVLITEDADEAVKDADVLYTDVWVSMGEEDKFAERVALLKPYQVNMDLVKKAGNENLIFLHCLPAFHDTHTVYGKDVAEKFGVEEMEVTDEVFRSKYARHFDQAENRMHTIKAVMAATLGNLYIPKV.

Carbamoyl phosphate contacts are provided by residues 58-61 (STRT), glutamine 85, arginine 109, and 136-139 (HPTQ). Residues asparagine 168, aspartate 232, and 236-237 (SM) each bind L-ornithine. Residues 273–274 (CL) and arginine 318 contribute to the carbamoyl phosphate site.

The protein belongs to the aspartate/ornithine carbamoyltransferase superfamily. OTCase family.

The protein localises to the cytoplasm. It catalyses the reaction carbamoyl phosphate + L-ornithine = L-citrulline + phosphate + H(+). The protein operates within amino-acid degradation; L-arginine degradation via ADI pathway; carbamoyl phosphate from L-arginine: step 2/2. Reversibly catalyzes the transfer of the carbamoyl group from carbamoyl phosphate (CP) to the N(epsilon) atom of ornithine (ORN) to produce L-citrulline. The chain is Ornithine carbamoyltransferase, catabolic from Streptococcus pneumoniae serotype 4 (strain ATCC BAA-334 / TIGR4).